We begin with the raw amino-acid sequence, 369 residues long: Succinyl-diaminopimelate desuccinylase (369 aa).

H77 serves as a coordination point for Zn(2+). Residue D79 is part of the active site. Residue D103 participates in Zn(2+) binding. The Proton acceptor role is filled by E136. E137, E165, and H345 together coordinate Zn(2+).

It belongs to the peptidase M20A family. Zn(2+) is required as a cofactor. Requires Co(2+) as cofactor.

The catalysed reaction is N-succinyl-(2S,6S)-2,6-diaminopimelate + H2O = (2S,6S)-2,6-diaminopimelate + succinate. It functions in the pathway amino-acid biosynthesis; L-lysine biosynthesis via DAP pathway; LL-2,6-diaminopimelate from (S)-tetrahydrodipicolinate (succinylase route): step 3/3. The polypeptide is Succinyl-diaminopimelate desuccinylase (dapE) (Corynebacterium glutamicum (strain ATCC 13032 / DSM 20300 / JCM 1318 / BCRC 11384 / CCUG 27702 / LMG 3730 / NBRC 12168 / NCIMB 10025 / NRRL B-2784 / 534)).